A 117-amino-acid polypeptide reads, in one-letter code: Inner kinetochore subunit MHF1 (117 aa).

It belongs to the TAF9 family. CENP-S/MHF1 subfamily. In terms of assembly, the MHF histone-fold complex is a heterotetramer of 2 MHF1-MHF2 heterodimers. Together with MPH1/FANCM, forms the FANCM-MHF complex. Component of the inner kinetochore constitutive centromere-associated network (CCAN).

DsDNA-binding component of a FANCM-MHF complex involved in DNA damage repair and genome maintenance. FANCM-MHF promotes gene conversion at blocked replication forks, probably by reversal of the stalled fork. Component of the kinetochore, a multiprotein complex that assembles on centromeric DNA and attaches chromosomes to spindle microtubules, mediating chromosome segregation and sister chromatid segregation during meiosis and mitosis. Component of the inner kinetochore constitutive centromere-associated network (CCAN), which serves as a structural platform for outer kinetochore assembly. This Candida albicans (strain SC5314 / ATCC MYA-2876) (Yeast) protein is Inner kinetochore subunit MHF1.